Reading from the N-terminus, the 377-residue chain is Chaperone protein DnaJ (377 aa).

In terms of domain architecture, J spans 5-70; the sequence is DYYEILGVSK…EKRSAYDQYG (66 aa). Residues 131 to 209 form a CR-type zinc finger; that stretch reads GVVREICVPT…CRGSGRIERT (79 aa). Residues C144, C147, C161, C164, C183, C186, C197, and C200 each coordinate Zn(2+). 4 CXXCXGXG motif repeats span residues 144–151, 161–168, 183–190, and 197–204; these read CLQCRGSG, CVTCHGHG, CPSCNGHG, and CNKCRGSG.

It belongs to the DnaJ family. In terms of assembly, homodimer. Requires Zn(2+) as cofactor.

The protein localises to the cytoplasm. Functionally, participates actively in the response to hyperosmotic and heat shock by preventing the aggregation of stress-denatured proteins and by disaggregating proteins, also in an autonomous, DnaK-independent fashion. Unfolded proteins bind initially to DnaJ; upon interaction with the DnaJ-bound protein, DnaK hydrolyzes its bound ATP, resulting in the formation of a stable complex. GrpE releases ADP from DnaK; ATP binding to DnaK triggers the release of the substrate protein, thus completing the reaction cycle. Several rounds of ATP-dependent interactions between DnaJ, DnaK and GrpE are required for fully efficient folding. Also involved, together with DnaK and GrpE, in the DNA replication of plasmids through activation of initiation proteins. In Blochmanniella floridana, this protein is Chaperone protein DnaJ.